The following is a 439-amino-acid chain: Probable glycine dehydrogenase (decarboxylating) subunit 1 (439 aa).

This sequence belongs to the GcvP family. N-terminal subunit subfamily. The glycine cleavage system is composed of four proteins: P, T, L and H. In this organism, the P 'protein' is a heterodimer of two subunits.

The enzyme catalyses N(6)-[(R)-lipoyl]-L-lysyl-[glycine-cleavage complex H protein] + glycine + H(+) = N(6)-[(R)-S(8)-aminomethyldihydrolipoyl]-L-lysyl-[glycine-cleavage complex H protein] + CO2. In terms of biological role, the glycine cleavage system catalyzes the degradation of glycine. The P protein binds the alpha-amino group of glycine through its pyridoxal phosphate cofactor; CO(2) is released and the remaining methylamine moiety is then transferred to the lipoamide cofactor of the H protein. In Aquifex aeolicus (strain VF5), this protein is Probable glycine dehydrogenase (decarboxylating) subunit 1.